The sequence spans 219 residues: 7-cyano-7-deazaguanine synthase (219 aa).

8–18 lines the ATP pocket; it reads LSGGMDSAVLL. Cys185, Cys193, Cys196, and Cys199 together coordinate Zn(2+).

It belongs to the QueC family. Zn(2+) is required as a cofactor.

The catalysed reaction is 7-carboxy-7-deazaguanine + NH4(+) + ATP = 7-cyano-7-deazaguanine + ADP + phosphate + H2O + H(+). Its pathway is purine metabolism; 7-cyano-7-deazaguanine biosynthesis. Its function is as follows. Catalyzes the ATP-dependent conversion of 7-carboxy-7-deazaguanine (CDG) to 7-cyano-7-deazaguanine (preQ(0)). The protein is 7-cyano-7-deazaguanine synthase of Desulfotalea psychrophila (strain LSv54 / DSM 12343).